Reading from the N-terminus, the 607-residue chain is UvrABC system protein C (607 aa).

One can recognise a GIY-YIG domain in the interval 11 to 89; sequence CKPGVYRFED…IKEFAPPCNV (79 aa). Residues 201 to 236 enclose the UVR domain; it reads SSLLESLKKKMLKASKNKEYEEAAILRDKIQAAQTV.

It belongs to the UvrC family. In terms of assembly, interacts with UvrB in an incision complex.

It is found in the cytoplasm. Functionally, the UvrABC repair system catalyzes the recognition and processing of DNA lesions. UvrC both incises the 5' and 3' sides of the lesion. The N-terminal half is responsible for the 3' incision and the C-terminal half is responsible for the 5' incision. This Tropheryma whipplei (strain TW08/27) (Whipple's bacillus) protein is UvrABC system protein C.